A 473-amino-acid chain; its full sequence is tRNA-2-methylthio-N(6)-dimethylallyladenosine synthase (473 aa).

The MTTase N-terminal domain occupies 5–125 (RKLHIKSFGC…LPQLLAEAAR (121 aa)). [4Fe-4S] cluster-binding residues include Cys-14, Cys-50, Cys-88, Cys-166, Cys-170, and Cys-173. The 233-residue stretch at 152-384 (RARGISAFVT…QELIDSQQAA (233 aa)) folds into the Radical SAM core domain. The 63-residue stretch at 387-449 (AAVIGTTVEV…RYSLIGELAA (63 aa)) folds into the TRAM domain. Residues 452 to 473 (QHSGFATRSEDSPQSLPITTGA) are disordered.

The protein belongs to the methylthiotransferase family. MiaB subfamily. In terms of assembly, monomer. Requires [4Fe-4S] cluster as cofactor.

It localises to the cytoplasm. It carries out the reaction N(6)-dimethylallyladenosine(37) in tRNA + (sulfur carrier)-SH + AH2 + 2 S-adenosyl-L-methionine = 2-methylsulfanyl-N(6)-dimethylallyladenosine(37) in tRNA + (sulfur carrier)-H + 5'-deoxyadenosine + L-methionine + A + S-adenosyl-L-homocysteine + 2 H(+). Its function is as follows. Catalyzes the methylthiolation of N6-(dimethylallyl)adenosine (i(6)A), leading to the formation of 2-methylthio-N6-(dimethylallyl)adenosine (ms(2)i(6)A) at position 37 in tRNAs that read codons beginning with uridine. This chain is tRNA-2-methylthio-N(6)-dimethylallyladenosine synthase, found in Rhodopseudomonas palustris (strain BisB18).